Consider the following 523-residue polypeptide: Tyrosine-protein kinase transforming protein Src (523 aa).

Residues 1 to 50 (MGSSKSKPKDPSQRRRSLEPPDSTHHGGFPASQTPNKTAAPDTHRTPSRS) form a disordered region. The N-myristoyl glycine; by host moiety is linked to residue Gly-2. The segment covering 7 to 25 (KPKDPSQRRRSLEPPDSTH) has biased composition (basic and acidic residues). The region spanning 71–139 (TSPQRAGALA…PSNYVAPSDS (69 aa)) is the SH3 domain. The region spanning 145–242 (WYFGKITRRE…GLCHRLTNVC (98 aa)) is the SH2 domain. One can recognise a Protein kinase domain in the interval 264 to 514 (LRLEVKLGQG…TFEYLQAQLL (251 aa)). Residues 270–278 (LGQGYFGEV) and Lys-292 each bind ATP. The active-site Proton acceptor is Asp-383. Phosphotyrosine; by autocatalysis is present on Tyr-413.

This sequence belongs to the protein kinase superfamily. Tyr protein kinase family. SRC subfamily. Homodimer. In terms of processing, the phosphorylated form is termed pp60v-src.

The enzyme catalyses L-tyrosyl-[protein] + ATP = O-phospho-L-tyrosyl-[protein] + ADP + H(+). Its function is as follows. This phosphoprotein, required for both the initiation and the maintenance of neoplastic transformation, is a protein kinase that catalyzes the phosphorylation of tyrosine residues in vitro. This Gallus gallus (Chicken) protein is Tyrosine-protein kinase transforming protein Src (V-SRC).